The chain runs to 393 residues: Protein TsgA (393 aa).

Transmembrane regions (helical) follow at residues Trp11–Met31, Phe51–Pro71, Phe78–Leu98, Thr101–Ile121, Leu134–Phe154, Trp162–Gly182, Ile206–Ile226, Thr245–Leu265, Ile273–Pro293, Ala297–Leu317, Phe332–Val352, and Leu361–Val381.

This sequence belongs to the major facilitator superfamily. TsgA family.

The protein localises to the cell inner membrane. This Shigella boydii serotype 4 (strain Sb227) protein is Protein TsgA.